The sequence spans 135 residues: Endoribonuclease YbeY (135 aa).

Zn(2+) contacts are provided by H94, H98, and H104.

It belongs to the endoribonuclease YbeY family. The cofactor is Zn(2+).

It localises to the cytoplasm. Functionally, single strand-specific metallo-endoribonuclease involved in late-stage 70S ribosome quality control and in maturation of the 3' terminus of the 16S rRNA. The chain is Endoribonuclease YbeY from Campylobacter jejuni subsp. jejuni serotype O:2 (strain ATCC 700819 / NCTC 11168).